We begin with the raw amino-acid sequence, 782 residues long: Coiled-coil alpha-helical rod protein 1 (782 aa).

Composition is skewed to basic and acidic residues over residues 62-74 (ERDV…EPGR) and 208-218 (ETRRAGEAKEL). Disordered regions lie at residues 62-82 (ERDV…WGLE) and 177-218 (EQLS…AKEL). 3 coiled-coil regions span residues 111–303 (LRET…SLTH), 344–437 (LMVQ…NAVS), and 498–691 (VTDV…QQEG).

As to expression, found in all tissues tested, abundantly expressed in heart, liver, skeletal muscle, kidney and pancreas, and to a lesser extent in lung and placenta. Overexpressed in keratinocytes of psoriatic lesions.

It localises to the cytoplasm. It is found in the nucleus. Functionally, may be a regulator of keratinocyte proliferation or differentiation. The sequence is that of Coiled-coil alpha-helical rod protein 1 (CCHCR1) from Homo sapiens (Human).